Here is a 204-residue protein sequence, read N- to C-terminus: Large ribosomal subunit protein bL25 (204 aa).

This sequence belongs to the bacterial ribosomal protein bL25 family. CTC subfamily. In terms of assembly, part of the 50S ribosomal subunit; part of the 5S rRNA/L5/L18/L25 subcomplex. Contacts the 5S rRNA. Binds to the 5S rRNA independently of L5 and L18.

Its function is as follows. This is one of the proteins that binds to the 5S RNA in the ribosome where it forms part of the central protuberance. The sequence is that of Large ribosomal subunit protein bL25 from Burkholderia mallei (strain NCTC 10247).